A 360-amino-acid polypeptide reads, in one-letter code: Peptide chain release factor 1 (360 aa).

Gln235 carries the post-translational modification N5-methylglutamine. Positions 284-312 (ERQAQAQADTRRNLLGSGDRSDKIRTYNY) are disordered.

Belongs to the prokaryotic/mitochondrial release factor family. Methylated by PrmC. Methylation increases the termination efficiency of RF1.

The protein resides in the cytoplasm. Peptide chain release factor 1 directs the termination of translation in response to the peptide chain termination codons UAG and UAA. The protein is Peptide chain release factor 1 of Histophilus somni (strain 129Pt) (Haemophilus somnus).